The following is a 242-amino-acid chain: Orotidine 5'-phosphate decarboxylase (242 aa).

Residues Asp21, Lys43, 71–80, Thr124, Arg185, Gln195, Gly215, and Arg216 each bind substrate; that span reads DLKFFDVPET. Lys73 serves as the catalytic Proton donor.

This sequence belongs to the OMP decarboxylase family. Type 1 subfamily. Homodimer.

The catalysed reaction is orotidine 5'-phosphate + H(+) = UMP + CO2. It participates in pyrimidine metabolism; UMP biosynthesis via de novo pathway; UMP from orotate: step 2/2. In terms of biological role, catalyzes the decarboxylation of orotidine 5'-monophosphate (OMP) to uridine 5'-monophosphate (UMP). In Methylococcus capsulatus (strain ATCC 33009 / NCIMB 11132 / Bath), this protein is Orotidine 5'-phosphate decarboxylase.